The following is a 577-amino-acid chain: Arginine--tRNA ligase (577 aa).

The 'HIGH' region signature appears at 122 to 132 (PNVAKEMHVGH).

This sequence belongs to the class-I aminoacyl-tRNA synthetase family. Monomer.

It is found in the cytoplasm. It carries out the reaction tRNA(Arg) + L-arginine + ATP = L-arginyl-tRNA(Arg) + AMP + diphosphate. The chain is Arginine--tRNA ligase from Escherichia coli O8 (strain IAI1).